Reading from the N-terminus, the 138-residue chain is MMIWKRHLTLAELNATSQNTMVAHLGIVYTRLGDDVLEAEMPVDSRTHQPFGLLHGGASAALAETLGSMAGFLLTRDGQCVVGTELNATHHRPVSQGKVRGVCQPLHLGRQSQSWEIVVFDEQGRRCCTCRLGTAVIG.

The active-site Nucleophile or proton acceptor is Glu64.

The protein belongs to the thioesterase PaaI family. Homotetramer. Dimer of dimers. Interacts specifically with the aryl carrier protein (ArCP) domain of EntB.

Its subcellular location is the cytoplasm. It functions in the pathway siderophore biosynthesis; enterobactin biosynthesis. Its function is as follows. Required for optimal enterobactin synthesis. Acts as a proofreading enzyme that prevents EntB misacylation by hydrolyzing the thioester bound existing between EntB and wrongly charged molecules. The polypeptide is Proofreading thioesterase EntH (Citrobacter rodentium (strain ICC168) (Citrobacter freundii biotype 4280)).